The chain runs to 332 residues: Anthranilate phosphoribosyltransferase (332 aa).

5-phospho-alpha-D-ribose 1-diphosphate is bound by residues Gly-79, 82 to 83, Thr-87, 89 to 92, 107 to 115, and Ser-119; these read GD, NIST, and KHGNRSVSS. Gly-79 serves as a coordination point for anthranilate. Ser-91 provides a ligand contact to Mg(2+). Residue Asn-110 participates in anthranilate binding. Anthranilate is bound at residue Arg-165. Residues Asp-223 and Glu-224 each contribute to the Mg(2+) site.

Belongs to the anthranilate phosphoribosyltransferase family. In terms of assembly, homodimer. The cofactor is Mg(2+).

It carries out the reaction N-(5-phospho-beta-D-ribosyl)anthranilate + diphosphate = 5-phospho-alpha-D-ribose 1-diphosphate + anthranilate. It participates in amino-acid biosynthesis; L-tryptophan biosynthesis; L-tryptophan from chorismate: step 2/5. Functionally, catalyzes the transfer of the phosphoribosyl group of 5-phosphorylribose-1-pyrophosphate (PRPP) to anthranilate to yield N-(5'-phosphoribosyl)-anthranilate (PRA). This is Anthranilate phosphoribosyltransferase from Vibrio vulnificus (strain CMCP6).